The chain runs to 317 residues: Protein lifeguard 2 (317 aa).

The segment at 1-54 (MTQGKLSVANKAPGTEGQQHQANGEKKDAPAVPSAPPSYEEATSGEGLKAGTFP) is disordered. Helical transmembrane passes span 107–127 (VYTI…LFTF), 139–159 (PGWY…LACC), and 166–186 (FPWN…LTGM). An N-linked (GlcNAc...) asparagine glycan is attached at N192. 4 consecutive transmembrane segments (helical) span residues 195-215 (SVLL…IFSF), 226-246 (GVLF…AVLL), 252-272 (PWLH…FLAF), and 291-311 (IFGA…FLQL).

Belongs to the BI1 family. LFG subfamily. Interacts with FAS/TNFRSF6 and BAX. Brain. Highly expressed in cerebellum, also found in cortex, olfactory bulb, and hippocampus.

It is found in the cell membrane. The protein localises to the membrane raft. It localises to the postsynaptic cell membrane. In terms of biological role, antiapoptotic protein which protects cells uniquely from Fas-induced apoptosis. Regulates Fas-mediated apoptosis in neurons by interfering with caspase-8 activation. Plays a role in cerebellar development by affecting cerebellar size, internal granular layer (IGL) thickness, and Purkinje cell (PC) development. The polypeptide is Protein lifeguard 2 (Faim2) (Mus musculus (Mouse)).